The chain runs to 361 residues: Probable dual-specificity RNA methyltransferase RlmN (361 aa).

The active-site Proton acceptor is E91. The Radical SAM core domain occupies 97 to 329; the sequence is QHYGLSVCVT…KKKGVNCVVR (233 aa). Cysteines 104 and 340 form a disulfide. Residues C111, C115, and C118 each coordinate [4Fe-4S] cluster. Residues 163–164, S195, 218–220, and N296 each bind S-adenosyl-L-methionine; these read GE and SLH. C340 acts as the S-methylcysteine intermediate in catalysis.

The protein belongs to the radical SAM superfamily. RlmN family. It depends on [4Fe-4S] cluster as a cofactor.

The protein resides in the cytoplasm. It catalyses the reaction adenosine(2503) in 23S rRNA + 2 reduced [2Fe-2S]-[ferredoxin] + 2 S-adenosyl-L-methionine = 2-methyladenosine(2503) in 23S rRNA + 5'-deoxyadenosine + L-methionine + 2 oxidized [2Fe-2S]-[ferredoxin] + S-adenosyl-L-homocysteine. It carries out the reaction adenosine(37) in tRNA + 2 reduced [2Fe-2S]-[ferredoxin] + 2 S-adenosyl-L-methionine = 2-methyladenosine(37) in tRNA + 5'-deoxyadenosine + L-methionine + 2 oxidized [2Fe-2S]-[ferredoxin] + S-adenosyl-L-homocysteine. Its function is as follows. Specifically methylates position 2 of adenine 2503 in 23S rRNA and position 2 of adenine 37 in tRNAs. This is Probable dual-specificity RNA methyltransferase RlmN from Streptococcus pneumoniae serotype 19F (strain G54).